A 249-amino-acid polypeptide reads, in one-letter code: DNA polymerase sliding clamp (249 aa).

Belongs to the PCNA family. As to quaternary structure, homotrimer. The subunits circularize to form a toroid; DNA passes through its center. Replication factor C (RFC) is required to load the toroid on the DNA.

Its function is as follows. Sliding clamp subunit that acts as a moving platform for DNA processing. Responsible for tethering the catalytic subunit of DNA polymerase and other proteins to DNA during high-speed replication. The polypeptide is DNA polymerase sliding clamp (Thermococcus fumicolans).